The chain runs to 585 residues: Arginine--tRNA ligase (585 aa).

The short motif at 131-141 (ANPTGPMHVGH) is the 'HIGH' region element.

This sequence belongs to the class-I aminoacyl-tRNA synthetase family. As to quaternary structure, monomer.

The protein localises to the cytoplasm. It carries out the reaction tRNA(Arg) + L-arginine + ATP = L-arginyl-tRNA(Arg) + AMP + diphosphate. The chain is Arginine--tRNA ligase from Bartonella bacilliformis (strain ATCC 35685 / KC583 / Herrer 020/F12,63).